A 436-amino-acid polypeptide reads, in one-letter code: Hydrogenobyrinate a,c-diamide synthase (436 aa).

The GATase cobBQ-type domain occupies 244–435 (RIAVARDDAF…MHVIDFSGEA (192 aa)). Residue Cys-327 is the Nucleophile of the active site.

The protein belongs to the CobB/CbiA family. It depends on Mg(2+) as a cofactor.

It carries out the reaction hydrogenobyrinate + 2 L-glutamine + 2 ATP + 2 H2O = hydrogenobyrinate a,c-diamide + 2 L-glutamate + 2 ADP + 2 phosphate + 2 H(+). Its pathway is cofactor biosynthesis; adenosylcobalamin biosynthesis; cob(II)yrinate a,c-diamide from precorrin-2 (aerobic route): step 9/10. In terms of biological role, catalyzes the ATP-dependent amidation of the two carboxylate groups at positions a and c of hydrogenobyrinate, using either L-glutamine or ammonia as the nitrogen source. In Brucella suis biovar 1 (strain 1330), this protein is Hydrogenobyrinate a,c-diamide synthase.